Here is a 930-residue protein sequence, read N- to C-terminus: APC membrane recruitment protein 1 (930 aa).

Disordered stretches follow at residues 1–33 (MEIA…PPSV), 55–76 (FFGG…TKSQ), 104–133 (CSEP…LFSS), 161–193 (TVPG…NQTT), 222–245 (EMDK…RQEG), and 366–454 (EVCY…PRDS). A compositionally biased stretch (basic and acidic residues) spans 222–242 (EMDKRRRAEEEGIGEDEKTGR). Polar residues-rich tracts occupy residues 377-399 (DSPS…SSPM) and 413-424 (SPQSDRQESVPN). Residues 439-452 (EESRERPHQERLPR) are compositionally biased toward basic and acidic residues.

The protein belongs to the Amer family.

Its subcellular location is the cytoplasm. The protein localises to the cell membrane. It localises to the nucleus. In terms of biological role, regulator of the canonical Wnt signaling pathway. Acts by specifically binding phosphatidylinositol 4,5-bisphosphate (PtdIns(4,5)P2), translocating to the cell membrane and interacting with key regulators of the canonical Wnt signaling pathway, such as components of the beta-catenin destruction complex. Acts both as a positive and negative regulator of the Wnt signaling pathway, depending on the context. The chain is APC membrane recruitment protein 1 (amer1) from Danio rerio (Zebrafish).